Consider the following 112-residue polypeptide: Integration host factor subunit alpha (112 aa).

Belongs to the bacterial histone-like protein family. Heterodimer of an alpha and a beta chain.

Its function is as follows. This protein is one of the two subunits of integration host factor, a specific DNA-binding protein that functions in genetic recombination as well as in transcriptional and translational control. The sequence is that of Integration host factor subunit alpha from Sinorhizobium medicae (strain WSM419) (Ensifer medicae).